The chain runs to 209 residues: Dehydration-responsive element-binding protein 1F (209 aa).

Positions 14–26 (KKRAGRRVFKETR) match the Nuclear localization signal motif. A DNA-binding region (AP2/ERF) is located at residues 29–86 (VYRGIRRRNGDKWVCEVREPTHQRRIWLGTYPTADMAARAHDVAVLALRGRSACLNFA). A disordered region spans residues 137-157 (FGSGSGSGSGSEERNSSSYGF).

The protein belongs to the AP2/ERF transcription factor family. ERF subfamily.

The protein resides in the nucleus. In terms of biological role, transcriptional activator that binds specifically to the DNA sequence 5'-[AG]CCGAC-3'. Binding to the C-repeat/DRE element mediates cold or dehydration-inducible transcription. CBF/DREB1 factors play a key role in freezing tolerance and cold acclimation. The polypeptide is Dehydration-responsive element-binding protein 1F (DREB1F) (Arabidopsis thaliana (Mouse-ear cress)).